We begin with the raw amino-acid sequence, 232 residues long: Orotate phosphoribosyltransferase (232 aa).

Residues arginine 107, lysine 108, lysine 111, and 133–141 (EDLTTDGGS) each bind 5-phospho-alpha-D-ribose 1-diphosphate. Threonine 137 contacts orotate.

This sequence belongs to the purine/pyrimidine phosphoribosyltransferase family. PyrE subfamily. In terms of assembly, homodimer. Mg(2+) is required as a cofactor.

It carries out the reaction orotidine 5'-phosphate + diphosphate = orotate + 5-phospho-alpha-D-ribose 1-diphosphate. The protein operates within pyrimidine metabolism; UMP biosynthesis via de novo pathway; UMP from orotate: step 1/2. Functionally, catalyzes the transfer of a ribosyl phosphate group from 5-phosphoribose 1-diphosphate to orotate, leading to the formation of orotidine monophosphate (OMP). The chain is Orotate phosphoribosyltransferase from Cereibacter sphaeroides (strain ATCC 17029 / ATH 2.4.9) (Rhodobacter sphaeroides).